A 185-amino-acid chain; its full sequence is Large ribosomal subunit protein uL5 (185 aa).

Belongs to the universal ribosomal protein uL5 family. Part of the 50S ribosomal subunit; part of the 5S rRNA/L5/L18/L25 subcomplex. Contacts the 5S rRNA and the P site tRNA. Forms a bridge to the 30S subunit in the 70S ribosome.

Its function is as follows. This is one of the proteins that bind and probably mediate the attachment of the 5S RNA into the large ribosomal subunit, where it forms part of the central protuberance. In the 70S ribosome it contacts protein S13 of the 30S subunit (bridge B1b), connecting the 2 subunits; this bridge is implicated in subunit movement. Contacts the P site tRNA; the 5S rRNA and some of its associated proteins might help stabilize positioning of ribosome-bound tRNAs. This Parvibaculum lavamentivorans (strain DS-1 / DSM 13023 / NCIMB 13966) protein is Large ribosomal subunit protein uL5.